The sequence spans 377 residues: D-alanine--D-alanine ligase (377 aa).

Residues 137–346 (KELMTVNGIR…RSQQAEKLIQ (210 aa)) form the ATP-grasp domain. Residue 167–222 (SKQLGEVVFVKAANQGSSVGVSRVTNAEEYENALRDSFQYDEKLLVEKAVESPTEL) coordinates ATP. The Mg(2+) site is built by D300, E313, and N315.

The protein belongs to the D-alanine--D-alanine ligase family. Requires Mg(2+) as cofactor. Mn(2+) is required as a cofactor.

The protein localises to the cytoplasm. The enzyme catalyses 2 D-alanine + ATP = D-alanyl-D-alanine + ADP + phosphate + H(+). It participates in cell wall biogenesis; peptidoglycan biosynthesis. In terms of biological role, cell wall formation. The polypeptide is D-alanine--D-alanine ligase (Oenococcus oeni (strain ATCC BAA-331 / PSU-1)).